The sequence spans 103 residues: Small ribosomal subunit protein uS10 (103 aa).

This sequence belongs to the universal ribosomal protein uS10 family. In terms of assembly, part of the 30S ribosomal subunit.

In terms of biological role, involved in the binding of tRNA to the ribosomes. This Novosphingobium aromaticivorans (strain ATCC 700278 / DSM 12444 / CCUG 56034 / CIP 105152 / NBRC 16084 / F199) protein is Small ribosomal subunit protein uS10.